A 52-amino-acid polypeptide reads, in one-letter code: Insulin (52 aa).

3 cysteine pairs are disulfide-bonded: cysteine 7–cysteine 38, cysteine 19–cysteine 51, and cysteine 37–cysteine 42.

This sequence belongs to the insulin family. In terms of assembly, heterodimer of a B chain and an A chain linked by two disulfide bonds.

The protein resides in the secreted. Insulin decreases blood glucose concentration. It increases cell permeability to monosaccharides, amino acids and fatty acids. It accelerates glycolysis, the pentose phosphate cycle, and glycogen synthesis in liver. The polypeptide is Insulin (ins) (Atractosteus spatula (Alligator gar)).